Reading from the N-terminus, the 737-residue chain is Polyribonucleotide nucleotidyltransferase (737 aa).

The Mg(2+) site is built by Asp-514 and Asp-520. In terms of domain architecture, KH spans 580 to 639 (PRIITVKIPVDKIGEVIGPKGKMINQIQEDTGADITIEDDGTIYIGAQAGSQAEAARATI). An S1 motif domain is found at 651-723 (GERYLGTVVK…SRGKLSLIPV (73 aa)).

It belongs to the polyribonucleotide nucleotidyltransferase family. It depends on Mg(2+) as a cofactor.

The protein localises to the cytoplasm. It carries out the reaction RNA(n+1) + phosphate = RNA(n) + a ribonucleoside 5'-diphosphate. Functionally, involved in mRNA degradation. Catalyzes the phosphorolysis of single-stranded polyribonucleotides processively in the 3'- to 5'-direction. This chain is Polyribonucleotide nucleotidyltransferase, found in Streptomyces griseus subsp. griseus (strain JCM 4626 / CBS 651.72 / NBRC 13350 / KCC S-0626 / ISP 5235).